A 64-amino-acid chain; its full sequence is Large ribosomal subunit protein bL32 (64 aa).

Residues 1–15 (MAVPKRKVSKSRRDS) are compositionally biased toward basic residues. A disordered region spans residues 1 to 21 (MAVPKRKVSKSRRDSRRAQTF).

Belongs to the bacterial ribosomal protein bL32 family.

In Symbiobacterium thermophilum (strain DSM 24528 / JCM 14929 / IAM 14863 / T), this protein is Large ribosomal subunit protein bL32.